Here is a 138-residue protein sequence, read N- to C-terminus: MWYQKTLTLSAKSRGFHLVTDEILNQLADMPRVNIGLLHLLLQHTSASLTLNENCDPTVRHDMERFFLRTVPDNGNYEHDYEGADDMPSHIKSSMLGTSLVLPVHKGRIQTGTWQGIWLGEHRIHGGSRRIIATLQGE.

Belongs to the UPF0047 family.

The protein is UPF0047 protein YjbQ (yjbQ) of Escherichia coli O157:H7.